The following is a 1141-amino-acid chain: Isoleucine--tRNA ligase, cytoplasmic (1141 aa).

A 'HIGH' region motif is present at residues 50 to 60 (PFATGLPHYGH). Residues 601 to 605 (KMSKS) carry the 'KMSKS' region motif. K604 is an ATP binding site.

It belongs to the class-I aminoacyl-tRNA synthetase family.

It localises to the cytoplasm. It carries out the reaction tRNA(Ile) + L-isoleucine + ATP = L-isoleucyl-tRNA(Ile) + AMP + diphosphate. This Caenorhabditis elegans protein is Isoleucine--tRNA ligase, cytoplasmic.